Consider the following 340-residue polypeptide: Nuclear hormone receptor family member nhr-197 (340 aa).

The nuclear receptor DNA-binding region spans 1 to 75 (MNCVVCSGRA…VGMTLAPLND (75 aa)). 2 NR C4-type zinc fingers span residues 3-23 (CVVC…CFAC) and 39-58 (CKRI…CRAC). The NR LBD domain maps to 98–337 (KNDKNYSHFV…KRIMQDLFSN (240 aa)).

It belongs to the nuclear hormone receptor family.

The protein localises to the nucleus. In terms of biological role, orphan nuclear receptor. The polypeptide is Nuclear hormone receptor family member nhr-197 (nhr-197) (Caenorhabditis elegans).